Consider the following 446-residue polypeptide: Butyryl-CoA:acetate CoA-transferase (446 aa).

CoA is bound at residue 220 to 224; the sequence is GIGGM. The active-site 5-glutamyl coenzyme A thioester intermediate is the Glu-245. CoA is bound by residues Val-320, Gly-343, and Lys-370.

This sequence belongs to the acetyl-CoA hydrolase/transferase family. Butyryl-CoA CoA-transferase subfamily.

It catalyses the reaction butanoate + acetyl-CoA = butanoyl-CoA + acetate. It carries out the reaction propanoate + acetyl-CoA = propanoyl-CoA + acetate. It functions in the pathway lipid metabolism; butanoate metabolism. Its function is as follows. Coenzyme A-transferase that converts butyryl-CoA to butyrate. Can also use proprionyl-CoA as substrate in vitro. The protein is Butyryl-CoA:acetate CoA-transferase of Anaerostipes caccae (strain DSM 14662 / CCUG 47493 / JCM 13470 / NCIMB 13811 / L1-92).